The sequence spans 405 residues: Elongation factor Tu (405 aa).

The 204-residue stretch at K10–E213 folds into the tr-type G domain. Residues G19–S26 form a G1 region. G19 to S26 contacts GTP. S26 serves as a coordination point for Mg(2+). Positions G64–N68 are G2. Positions D85 to G88 are G3. GTP contacts are provided by residues D85 to H89 and N140 to D143. The G4 stretch occupies residues N140–D143. Residues S178 to L180 are G5.

Belongs to the TRAFAC class translation factor GTPase superfamily. Classic translation factor GTPase family. EF-Tu/EF-1A subfamily. In terms of assembly, monomer.

Its subcellular location is the cytoplasm. It catalyses the reaction GTP + H2O = GDP + phosphate + H(+). Its function is as follows. GTP hydrolase that promotes the GTP-dependent binding of aminoacyl-tRNA to the A-site of ribosomes during protein biosynthesis. In Aquifex pyrophilus, this protein is Elongation factor Tu.